Here is a 180-residue protein sequence, read N- to C-terminus: Adenine phosphoribosyltransferase (180 aa).

The protein belongs to the purine/pyrimidine phosphoribosyltransferase family. As to quaternary structure, homodimer.

It is found in the cytoplasm. It catalyses the reaction AMP + diphosphate = 5-phospho-alpha-D-ribose 1-diphosphate + adenine. It functions in the pathway purine metabolism; AMP biosynthesis via salvage pathway; AMP from adenine: step 1/1. Its function is as follows. Catalyzes a salvage reaction resulting in the formation of AMP, that is energically less costly than de novo synthesis. This is Adenine phosphoribosyltransferase from Agrobacterium fabrum (strain C58 / ATCC 33970) (Agrobacterium tumefaciens (strain C58)).